We begin with the raw amino-acid sequence, 129 residues long: MRGVTETDKLANGIFHLVCLADLEFDYINPYDSASRINSVVLPEFIVQGVLCVFYLLTGHWFMTLLCLPYLYYNFHLYSKRQHLVDVTEIFNLLNWEKKKRLFKLAYIVLNLFLTIFWMIYSALDDYED.

2 consecutive transmembrane segments (helical) span residues 45-65 (FIVQ…FMTL) and 105-125 (LAYI…SALD).

The protein belongs to the cornichon family.

Its subcellular location is the membrane. This chain is Probable protein cornichon homolog 2, found in Arabidopsis thaliana (Mouse-ear cress).